The sequence spans 310 residues: p-hydroxybenzoic acid efflux pump subunit AaeA (310 aa).

Residues 12-32 form a helical membrane-spanning segment; it reads AITVVLVILAFIAIFNAWVYY.

Belongs to the membrane fusion protein (MFP) (TC 8.A.1) family.

It localises to the cell inner membrane. Its function is as follows. Forms an efflux pump with AaeB. In Escherichia coli O7:K1 (strain IAI39 / ExPEC), this protein is p-hydroxybenzoic acid efflux pump subunit AaeA.